Reading from the N-terminus, the 350-residue chain is Protein-glutamate methylesterase/protein-glutamine glutaminase (350 aa).

One can recognise a Response regulatory domain in the interval 5 to 122 (KVLCVDDSAL…RDGLIEYSEV (118 aa)). Asp56 is modified (4-aspartylphosphate). The CheB-type methylesterase domain maps to 152 to 346 (PFASSEKLVI…ERILTRLGDR (195 aa)). Residues Ser165, His191, and Asp288 contribute to the active site.

Belongs to the CheB family. In terms of processing, phosphorylated by CheA. Phosphorylation of the N-terminal regulatory domain activates the methylesterase activity.

The protein localises to the cytoplasm. It carries out the reaction [protein]-L-glutamate 5-O-methyl ester + H2O = L-glutamyl-[protein] + methanol + H(+). The enzyme catalyses L-glutaminyl-[protein] + H2O = L-glutamyl-[protein] + NH4(+). Its function is as follows. Involved in chemotaxis. Part of a chemotaxis signal transduction system that modulates chemotaxis in response to various stimuli. Catalyzes the demethylation of specific methylglutamate residues introduced into the chemoreceptors (methyl-accepting chemotaxis proteins or MCP) by CheR. Also mediates the irreversible deamidation of specific glutamine residues to glutamic acid. The protein is Protein-glutamate methylesterase/protein-glutamine glutaminase of Bordetella bronchiseptica (strain ATCC BAA-588 / NCTC 13252 / RB50) (Alcaligenes bronchisepticus).